A 404-amino-acid polypeptide reads, in one-letter code: Aspartokinase 1 (404 aa).

7 to 10 contributes to the ATP binding site; sequence KFGG. Residue 25 to 30 participates in substrate binding; that stretch reads HIKEAI. Serine 41 contributes to the ATP binding site. Substrate contacts are provided by residues 52–54, glutamate 79, 130–131, 155–158, and serine 158; these read TDS, LA, and RGGS. ATP-binding positions include 178–179 and 184–189; these read TD and MTADPR. Residues 299–301, 355–356, 369–370, and 376–377 contribute to the substrate site; these read SVD, VT, PI, and SH. In terms of domain architecture, ACT spans 344-404; the sequence is AVGAGIMGVP…ALHEVFELSK (61 aa).

This sequence belongs to the aspartokinase family. Tetramer consisting of 2 isoforms Alpha (catalytic) and 2 isoforms Beta (function not known).

It catalyses the reaction L-aspartate + ATP = 4-phospho-L-aspartate + ADP. It functions in the pathway amino-acid biosynthesis; L-lysine biosynthesis via DAP pathway; (S)-tetrahydrodipicolinate from L-aspartate: step 1/4. It participates in amino-acid biosynthesis; L-methionine biosynthesis via de novo pathway; L-homoserine from L-aspartate: step 1/3. The protein operates within amino-acid biosynthesis; L-threonine biosynthesis; L-threonine from L-aspartate: step 1/5. Its activity is regulated as follows. Diaminopimelate-sensitive. In terms of biological role, catalyzes the phosphorylation of the beta-carboxyl group of aspartic acid with ATP to yield 4-phospho-L-aspartate, which is involved in the branched biosynthetic pathway leading to the biosynthesis of amino acids threonine, isoleucine and methionine. The protein is Aspartokinase 1 (dapG) of Bacillus subtilis (strain 168).